We begin with the raw amino-acid sequence, 647 residues long: Neutral endopeptidase (647 aa).

In terms of domain architecture, Peptidase M13 spans 1–647 (MRRYLAVRGG…LDPEDRITIW (647 aa)). Zn(2+) is bound at residue His496. The active site involves Glu497. 2 residues coordinate Zn(2+): His500 and Glu556. Asp560 (proton donor) is an active-site residue.

This sequence belongs to the peptidase M13 family. Zn(2+) serves as cofactor.

The polypeptide is Neutral endopeptidase (pepO) (Lactobacillus helveticus (Lactobacillus suntoryeus)).